The following is a 462-amino-acid chain: MKFPESLKGLKILVLGGGISGNSALDFLISEEAQPILCDRNQPETISVPFFHDNIDPRSFFEISLIIKSPGILPTHPILSYAVEKKIPVFSEIDLGRFFFKGKIIGITGTDGKSTTTSLVAHLLKKDFSDLKEGGNLGIPFTSFCKEPISLAVLELSSYQLEDSSPLDLNVSVFLNLAPDHLERHETMENYFRAKLKIADLQNPNHSLIVSEKIREKILNSTSVQCKLLSFGRATTSEAILDESSSEIRTSKFIYDISRFYLPGTHNRENLAAAILASEAIGGKPESIQAQIPFFMGLPHRFQIAGEKRGISFINDSKSTNLHSMLAGMSAWKNLDRTCLILGGRPKQEDPKPLYDFLMRGIGCVVLIGEARSVWEKGIRNVIGEKLFSVENLDEAFKIFKKWNVISESPEIRKIRLSSEITISYFVFSPACVSFDQYKNFEERGNHFLSLVEDFLNNASWT.

109–115 (GTDGKST) is a binding site for ATP.

It belongs to the MurCDEF family.

It is found in the cytoplasm. The catalysed reaction is UDP-N-acetyl-alpha-D-muramoyl-L-alanine + D-glutamate + ATP = UDP-N-acetyl-alpha-D-muramoyl-L-alanyl-D-glutamate + ADP + phosphate + H(+). Its pathway is cell wall biogenesis; peptidoglycan biosynthesis. Functionally, cell wall formation. Catalyzes the addition of glutamate to the nucleotide precursor UDP-N-acetylmuramoyl-L-alanine (UMA). The polypeptide is UDP-N-acetylmuramoylalanine--D-glutamate ligase (Leptospira borgpetersenii serovar Hardjo-bovis (strain JB197)).